Consider the following 253-residue polypeptide: 5-oxoprolinase subunit A (253 aa).

It belongs to the LamB/PxpA family. Forms a complex composed of PxpA, PxpB and PxpC.

The catalysed reaction is 5-oxo-L-proline + ATP + 2 H2O = L-glutamate + ADP + phosphate + H(+). Its function is as follows. Catalyzes the cleavage of 5-oxoproline to form L-glutamate coupled to the hydrolysis of ATP to ADP and inorganic phosphate. This chain is 5-oxoprolinase subunit A, found in Bacillus cereus (strain AH820).